The chain runs to 491 residues: Ketol-acid reductoisomerase (NADP(+)) (491 aa).

The 194-residue stretch at 15 to 208 (AQLGKCRFMG…GGHRAGVLES (194 aa)) folds into the KARI N-terminal Rossmann domain. NADP(+) contacts are provided by residues 45 to 48 (CGAQ), arginine 68, arginine 76, serine 78, and 108 to 110 (DKQ). The active site involves histidine 132. Glycine 158 lines the NADP(+) pocket. 2 consecutive KARI C-terminal knotted domains span residues 209–344 (SFVA…TAPQ) and 345–484 (YEGK…MTDM). Residues aspartate 217, glutamate 221, glutamate 389, and glutamate 393 each coordinate Mg(2+). Serine 414 lines the substrate pocket.

This sequence belongs to the ketol-acid reductoisomerase family. Mg(2+) serves as cofactor.

The catalysed reaction is (2R)-2,3-dihydroxy-3-methylbutanoate + NADP(+) = (2S)-2-acetolactate + NADPH + H(+). It carries out the reaction (2R,3R)-2,3-dihydroxy-3-methylpentanoate + NADP(+) = (S)-2-ethyl-2-hydroxy-3-oxobutanoate + NADPH + H(+). Its pathway is amino-acid biosynthesis; L-isoleucine biosynthesis; L-isoleucine from 2-oxobutanoate: step 2/4. It participates in amino-acid biosynthesis; L-valine biosynthesis; L-valine from pyruvate: step 2/4. In terms of biological role, involved in the biosynthesis of branched-chain amino acids (BCAA). Catalyzes an alkyl-migration followed by a ketol-acid reduction of (S)-2-acetolactate (S2AL) to yield (R)-2,3-dihydroxy-isovalerate. In the isomerase reaction, S2AL is rearranged via a Mg-dependent methyl migration to produce 3-hydroxy-3-methyl-2-ketobutyrate (HMKB). In the reductase reaction, this 2-ketoacid undergoes a metal-dependent reduction by NADPH to yield (R)-2,3-dihydroxy-isovalerate. The chain is Ketol-acid reductoisomerase (NADP(+)) from Escherichia coli O157:H7.